The sequence spans 155 residues: NADH-ubiquinone oxidoreductase chain 6 (155 aa).

Helical transmembrane passes span 24–44 (MSLL…LGSF), 51–71 (YILF…VCMI), 88–108 (AWGA…IILG), and 118–138 (IPMT…FAVV).

It belongs to the complex I subunit 6 family.

Its subcellular location is the mitochondrion membrane. The catalysed reaction is a ubiquinone + NADH + 5 H(+)(in) = a ubiquinol + NAD(+) + 4 H(+)(out). Functionally, core subunit of the mitochondrial membrane respiratory chain NADH dehydrogenase (Complex I) that is believed to belong to the minimal assembly required for catalysis. Complex I functions in the transfer of electrons from NADH to the respiratory chain. The immediate electron acceptor for the enzyme is believed to be ubiquinone. This Albinaria caerulea (Land snail) protein is NADH-ubiquinone oxidoreductase chain 6 (ND6).